The sequence spans 208 residues: Holliday junction resolvase RecU (208 aa).

Residues threonine 86, aspartate 88, glutamate 101, and glutamine 120 each contribute to the Mg(2+) site.

The protein belongs to the RecU family. Mg(2+) serves as cofactor.

The protein localises to the cytoplasm. It catalyses the reaction Endonucleolytic cleavage at a junction such as a reciprocal single-stranded crossover between two homologous DNA duplexes (Holliday junction).. Functionally, endonuclease that resolves Holliday junction intermediates in genetic recombination. Cleaves mobile four-strand junctions by introducing symmetrical nicks in paired strands. Promotes annealing of linear ssDNA with homologous dsDNA. Required for DNA repair, homologous recombination and chromosome segregation. The protein is Holliday junction resolvase RecU of Lacticaseibacillus casei (strain BL23) (Lactobacillus casei).